The following is a 674-amino-acid chain: U-box domain-containing protein 16 (674 aa).

Positions 273 to 347 (NIPADFRCPI…VLWCRDQKIP (75 aa)) constitute a U-box domain. ARM repeat units lie at residues 399-438 (TVARACIAEAGAIPKLVRYLATECPSLQINAVTTILNLSI), 441-481 (QNKT…SLAG), and 484-523 (AYRRRLGRKARVVSGLVDLAKQGPTSSKRDALVAILNLVA).

The catalysed reaction is S-ubiquitinyl-[E2 ubiquitin-conjugating enzyme]-L-cysteine + [acceptor protein]-L-lysine = [E2 ubiquitin-conjugating enzyme]-L-cysteine + N(6)-ubiquitinyl-[acceptor protein]-L-lysine.. Its pathway is protein modification; protein ubiquitination. In terms of biological role, functions as an E3 ubiquitin ligase. The polypeptide is U-box domain-containing protein 16 (PUB16) (Arabidopsis thaliana (Mouse-ear cress)).